Reading from the N-terminus, the 306-residue chain is HORMA domain-containing protein 2 (306 aa).

Residues 29–232 (HESLVVVKKL…SGFHSMKVKV (204 aa)) form the HORMA domain. A Phosphoserine modification is found at serine 271.

In terms of assembly, interacts with HORMAD1. In terms of processing, phosphorylated in a SPO11-dependent manner. As to expression, specifically expressed in meiotic germ cells.

It is found in the nucleus. The protein resides in the chromosome. Essential for synapsis surveillance during meiotic prophase via the recruitment of ATR activity. Plays a key role in the male mid-pachytene checkpoint and the female meiotic prophase checkpoint: required for efficient build-up of ATR activity on unsynapsed chromosome regions, a process believed to form the basis of meiotic silencing of unsynapsed chromatin (MSUC) and meiotic prophase quality control in both sexes. Required for the DNA double-strand break-independent, BRCA1-dependent activation of ATR on the sex chromosomes that is essential for normal sex body formation. The polypeptide is HORMA domain-containing protein 2 (Hormad2) (Mus musculus (Mouse)).